The following is a 980-amino-acid chain: Chitin binding domain containing chtb-2 (980 aa).

Residues 1 to 20 (MRTMHCFLFILLFCLGQVFT) form the signal peptide. N-linked (GlcNAc...) asparagine glycosylation is found at N187 and N190. 3 disordered regions span residues 310–354 (ERQQ…AELD), 431–451 (QEEE…QIRQ), and 486–512 (EILR…QQEA). N941 and N975 each carry an N-linked (GlcNAc...) asparagine glycan.

The chain is Chitin binding domain containing chtb-2 from Caenorhabditis elegans.